We begin with the raw amino-acid sequence, 873 residues long: DNA mismatch repair protein MutS (873 aa).

625–632 (GPNMGGKS) provides a ligand contact to ATP.

This sequence belongs to the DNA mismatch repair MutS family.

Its function is as follows. This protein is involved in the repair of mismatches in DNA. It is possible that it carries out the mismatch recognition step. This protein has a weak ATPase activity. This is DNA mismatch repair protein MutS from Xanthomonas campestris pv. campestris (strain 8004).